The sequence spans 385 residues: Acetate kinase (385 aa).

Asparagine 8 lines the Mg(2+) pocket. Residue lysine 15 participates in ATP binding. Residue arginine 85 participates in substrate binding. The active-site Proton donor/acceptor is the aspartate 142. ATP-binding positions include 200–204, 275–277, and 323–327; these read HLGNG, DMR, and GIGEN. Glutamate 373 contributes to the Mg(2+) binding site.

The protein belongs to the acetokinase family. In terms of assembly, homodimer. It depends on Mg(2+) as a cofactor. Requires Mn(2+) as cofactor.

Its subcellular location is the cytoplasm. The enzyme catalyses acetate + ATP = acetyl phosphate + ADP. Its pathway is metabolic intermediate biosynthesis; acetyl-CoA biosynthesis; acetyl-CoA from acetate: step 1/2. Catalyzes the formation of acetyl phosphate from acetate and ATP. Can also catalyze the reverse reaction. In Francisella tularensis subsp. holarctica (strain OSU18), this protein is Acetate kinase.